The chain runs to 623 residues: Bifunctional dihydrofolate reductase-thymidylate synthase (623 aa).

The region spanning 9-237 (DIYAICACCK…TTLDFLVYSK (229 aa)) is the DHFR domain. Substrate is bound at residue 13-14 (IC). NADP(+) is bound by residues Ala-15 and 38–44 (GLGNKGT). Substrate is bound at residue Asp-53. 3 consecutive repeat copies span residues 88–91 (GGDN), 94–97 (GGDN), and 100–103 (GGDN). The tract at residues 88-103 (GGDNTSGGDNTHGGDN) is 3 X 4 AA repeats of G-G-D-N. Residues 115-117 (RSS), 137-139 (SKT), and Asp-153 contribute to the NADP(+) site. The substrate site is built by Ile-173, Tyr-179, and Thr-194. 174–181 (GGAQVYRE) serves as a coordination point for NADP(+). The segment at 263-309 (TAMRRNVAPRTAAPPMGPHSRANGERAPPRARARRTTPRQRKTTSCT) is disordered. Residues 291–304 (PRARARRTTPRQRK) show a composition bias toward basic residues. The interval 337–623 (QHPEYQYLGI…HDKITMEMAA (287 aa)) is thymidylate synthase. DUMP is bound at residue Arg-360. Cys-505 is an active-site residue. Residues His-506, 524-528 (QRSCD), Asn-536, and 566-568 (HVY) each bind dUMP.

In the N-terminal section; belongs to the dihydrofolate reductase family. The protein in the C-terminal section; belongs to the thymidylate synthase family. Homodimer.

The enzyme catalyses (6S)-5,6,7,8-tetrahydrofolate + NADP(+) = 7,8-dihydrofolate + NADPH + H(+). It carries out the reaction dUMP + (6R)-5,10-methylene-5,6,7,8-tetrahydrofolate = 7,8-dihydrofolate + dTMP. The protein operates within cofactor biosynthesis; tetrahydrofolate biosynthesis; 5,6,7,8-tetrahydrofolate from 7,8-dihydrofolate: step 1/1. Its function is as follows. Bifunctional enzyme. Involved in de novo dTMP biosynthesis. Key enzyme in folate metabolism. Catalyzes an essential reaction for de novo glycine and purine synthesis, DNA precursor synthesis, and for the conversion of dUMP to dTMP. The protein is Bifunctional dihydrofolate reductase-thymidylate synthase of Plasmodium vivax.